The primary structure comprises 249 residues: LexA repressor (249 aa).

The tract at residues 1-26 (MAAQATGGRATQRSQQSPAKPKGLTV) is disordered. Residues 9–18 (RATQRSQQSP) show a composition bias toward polar residues. The H-T-H motif DNA-binding region spans 48 to 68 (MREIGDTVGLASLSSVTHQLS). Residues Ser173 and Lys210 each act as for autocatalytic cleavage activity in the active site.

It belongs to the peptidase S24 family. Homodimer.

It carries out the reaction Hydrolysis of Ala-|-Gly bond in repressor LexA.. In terms of biological role, represses a number of genes involved in the response to DNA damage (SOS response), including recA and lexA. In the presence of single-stranded DNA, RecA interacts with LexA causing an autocatalytic cleavage which disrupts the DNA-binding part of LexA, leading to derepression of the SOS regulon and eventually DNA repair. This chain is LexA repressor, found in Arthrobacter sp. (strain FB24).